Consider the following 452-residue polypeptide: Golgi reassembly-stacking protein 2 (452 aa).

A lipid anchor (N-myristoyl glycine) is attached at Gly2. 2 PDZ GRASP-type domains span residues 15-105 and 111-199; these read EGYH…FCSF and NVWH…YGYL. The GRASP stretch occupies residues 15–215; the sequence is EGYHVLRVQE…PFEEGKKISL (201 aa). 2 positions are modified to dimethylated arginine: Arg30 and Arg47. Residues 194-199 are important for membrane binding; it reads IGYGYL. Ser214 is modified (phosphoserine). Residues Thr222 and Thr225 each carry the phosphothreonine modification. Low complexity predominate over residues 372 to 424; sequence PESSSAASSGELLSSLPPTSNAPSDPATTTAKADAASSLTVDVTPPTAKAPTT. The tract at residues 372–452 is disordered; that stretch reads PESSSAASSG…AVDANASESP (81 aa). Ser409 is modified (phosphoserine). A phosphothreonine mark is found at Thr415 and Thr433. Ser436, Ser441, Ser449, and Ser451 each carry phosphoserine.

Belongs to the GORASP family. As to quaternary structure, homodimer. Homooligomer. ER stress induces phosphorylation-dependent monomerization. Interacts with BLZF1/Golgin 45. Identified in a complex with RAB2 and GORASP2. Interacts with JAM2 and JAM3. Interacts with members of the p24 cargo receptors. Interacts with CNIH1 and the cytoplasmic domain of transmembrane TGFA, prior its transit in the trans-Golgi. Interacts with KCTD5. Interacts with TMED2 and TMED3. Interacts with SEC16A in response to ER stress. Interacts (via PDZ GRASP-type 1 domain) with core-glycosylated CFTR in response to ER stress. In terms of processing, myristoylated. Myristoylation is essential for the Golgi targeting. Palmitoylated. Post-translationally, phosphorylated in mitotic cells. ER stress-induced phosphorylation at Ser-441 induces monomerization and subsequent relocalization from Golgi to ER which is essential for mediating unconventional (ER/Golgi-independent) trafficking of CFTR to the cell membrane.

It is found in the golgi apparatus membrane. It localises to the endoplasmic reticulum membrane. Its subcellular location is the golgi apparatus. Functionally, key structural protein of the Golgi apparatus. The membrane cisternae of the Golgi apparatus adhere to each other to form stacks, which are aligned side by side to form the Golgi ribbon. Acting in concert with GORASP1/GRASP65, is required for the formation and maintenance of the Golgi ribbon, and may be dispensable for the formation of stacks. However, other studies suggest that GORASP2 plays a role in the assembly and membrane stacking of the Golgi cisternae, and in the process by which Golgi stacks reform after breakdown during mitosis and meiosis. May regulate the intracellular transport and presentation of a defined set of transmembrane proteins, such as transmembrane TGFA. Required for normal acrosome formation during spermiogenesis and normal male fertility, probably by promoting colocalization of JAM2 and JAM3 at contact sites between germ cells and Sertoli cells. Mediates ER stress-induced unconventional (ER/Golgi-independent) trafficking of core-glycosylated CFTR to cell membrane. The sequence is that of Golgi reassembly-stacking protein 2 (GORASP2) from Homo sapiens (Human).